Consider the following 172-residue polypeptide: MORN repeat-containing protein 5 (172 aa).

MORN repeat units lie at residues 8-30 (YIGE…TETK), 31-53 (YIGE…NGSR), and 54-75 (FDAV…DGLQ).

It localises to the cell projection. The protein localises to the cilium. Its subcellular location is the flagellum. This is MORN repeat-containing protein 5 (MORN5) from Bos taurus (Bovine).